The sequence spans 450 residues: Glutamate--tRNA ligase 2 (450 aa).

The 'HIGH' region motif lies at proline 10–glycine 20. Positions lysine 232 to arginine 236 match the 'KMSKS' region motif. Lysine 235 provides a ligand contact to ATP.

This sequence belongs to the class-I aminoacyl-tRNA synthetase family. Glutamate--tRNA ligase type 1 subfamily. In terms of assembly, monomer.

The protein resides in the cytoplasm. It catalyses the reaction tRNA(Glu) + L-glutamate + ATP = L-glutamyl-tRNA(Glu) + AMP + diphosphate. Its function is as follows. Catalyzes the attachment of glutamate to tRNA(Glu) in a two-step reaction: glutamate is first activated by ATP to form Glu-AMP and then transferred to the acceptor end of tRNA(Glu). The polypeptide is Glutamate--tRNA ligase 2 (Wolbachia pipientis subsp. Culex pipiens (strain wPip)).